A 1118-amino-acid chain; its full sequence is Repetin (1118 aa).

Positions 1–91 (MPQLLNSILN…VQACHHKLDS (91 aa)) are S-100-like. EF-hand domains follow at residues 13–48 (KVFQ…LRRP) and 49–84 (NDPE…LVQA). Ca(2+) contacts are provided by Ser27, Glu32, Asp62, Asp64, Asn66, Tyr68, and Glu73. Residues 94 to 1118 (YGSRTSSQKE…YVQEQAAYQY (1025 aa)) are disordered. Residues 100–115 (SQKEHDQEGTRSHKFS) are compositionally biased toward basic and acidic residues. Residues 138–148 (SEGQHQNVQHD) are compositionally biased toward polar residues. 2 stretches are compositionally biased toward basic and acidic residues: residues 149–164 (QSQR…DTDP) and 172–186 (FHGD…RQDT). Residues 237 to 252 (GQSKTSGQQSSHGQSG) are compositionally biased toward low complexity. Residues 259-299 (YSSQTSQQESDSYEQYGSQHQKSGNSQTERQGQNSQYGQTN) show a composition bias toward polar residues. 48 tandem repeats follow at residues 273-284 (QYGSQHQKSGNS), 285-296 (QTERQGQNSQYG), 297-308 (QTNKKGHSSYHE), 309-320 (QTEGQGQSFHYG), 321-332 (QKGRKDQSFQQG), 333-344 (QKGRKDQSPHLG), 345-356 (QKGRQDQSPHRG), 357-368 (QKGRQDQSPHQG), 369-380 (QKGRQDQSPHRG), 381-392 (QKGRQDQSPHQG), 393-404 (QKGRQDQSPHLG), 405-416 (QKGRQDQSPHQG), 417-428 (QKGRQDQSPHQG), 429-440 (QKGRQDQSSHQG), 441-452 (QKGRQDQSSHQG), 453-464 (QKGRQDQSSHQG), 465-476 (QKGRQDQSSHQG), 477-488 (QREGQDQNSQWH), 489-500 (RTDSQGQSFHYG), 501-512 (QTGGHSLSSHQG), 513-524 (QTDSQGQNSNWH), 525-536 (RTDSQGQSFHYG), 537-548 (QTGGQGLSSHQG), 549-560 (QTDSQGQNSNWH), 561-572 (RTDSQGQSFHFD), 573-584 (QAGREVQGSHHG), 585-596 (QTDRQSQNSNWH), 597-608 (RTDSQGQSFHFD), 609-620 (QAGKEVQGSHQG), 621-632 (QTDSQGQSSHWH), 633-644 (QTDRQGQSSQQG), 645-656 (HKDRQGQNTHQG), 657-668 (QKGRQDLSPHQG), 669-680 (QKGRQDQSPHLG), 681-692 (QKGRHDQSPHQG), 693-704 (QKGRHDQSPHQG), 705-716 (QKGRQDLSSHQG), 717-728 (QKGRQDQSPHLG), 729-740 (QKGRHDQSPHRG), 741-752 (QKGRQDQSPHQG), 753-764 (QKGRQDQSSHQG), 765-776 (QREGQDQNSHWH), 777-788 (RTDRQGQSFHYG), 789-800 (QTGGQGLSSHQG), 801-812 (QTDSQGQNSQWH), 813-824 (RTDSQGQSFHFD), 825-836 (QAGREGQSSHHG), and 837-848 (QTDRQSQSSHCG). The 48 X 12 AA approximate tandem repeats of Q-[KT]-[GD]-[RS]-Q-[DG]-Q-S-[PS]-H-X-G stretch occupies residues 273–848 (QYGSQHQKSG…DRQSQSSHCG (576 aa)). Positions 321 to 764 (QKGRKDQSFQ…GRQDQSSHQG (444 aa)) are 22 X 12 AA approximate tandem repeats of Q-K-G-R-Q-D-Q-S-P-H-Q-G. Composition is skewed to basic and acidic residues over residues 347-363 (GRQD…RQDQ) and 371-387 (GRQD…RQDQ). A compositionally biased stretch (polar residues) spans 434 to 466 (DQSSHQGQKGRQDQSSHQGQKGRQDQSSHQGQK). A compositionally biased stretch (basic and acidic residues) spans 467–481 (GRQDQSSHQGQREGQ). 2 stretches are compositionally biased toward polar residues: residues 482-535 (DQNS…SFHY) and 543-570 (LSSH…QSFH). Polar residues-rich tracts occupy residues 587–606 (DRQS…QSFH) and 616–643 (GSHQ…SSQQ). Over residues 710 to 726 (DLSSHQGQKGRQDQSPH) the composition is skewed to polar residues. 2 stretches are compositionally biased toward basic and acidic residues: residues 731 to 747 (GRHD…RQDQ) and 755 to 769 (GRQD…REGQ). Polar residues-rich tracts occupy residues 795–822 (LSSH…QSFH), 833–848 (SHHG…SHCG), and 855–864 (TENQGQNRHS). Over residues 865 to 875 (LGTDRTRRDSY) the composition is skewed to basic and acidic residues. A compositionally biased stretch (polar residues) spans 876 to 889 (VEQSGRSVKLSQQN). 5 stretches are compositionally biased toward basic and acidic residues: residues 890–908 (SREE…RREQ), 947–965 (EQDH…HSVE), 978–998 (THEE…DEQN), 1005–1045 (QTHE…KEKY), and 1056–1065 (PNREKSHMSE).

The protein belongs to the S100-fused protein family. Post-translationally, potential substrate of transglutaminase. Some arginines are probably converted to citrullines by peptidylarginine deimidase. Detectable in the stratified internal epithelia of forestomach and tongue and to a lesser degree in normal skin epidermis, where it is restricted to the differentiated suprabasal cell layers. Overexpressed in skin tumors.

It is found in the secreted. The protein resides in the extracellular space. Its subcellular location is the extracellular matrix. Involved in the cornified cell envelope formation. Multifunctional epidermal matrix protein. The chain is Repetin (Rptn) from Mus musculus (Mouse).